The primary structure comprises 437 residues: GTPase Der (437 aa).

EngA-type G domains are found at residues 3-167 (NLVA…SKEG) and 176-352 (PRFA…QART). Residues 9-16 (GRPNVGKS), 56-60 (DTGGW), 119-122 (NKTD), 182-189 (GRPNAGKS), 229-233 (DTAGI), and 294-297 (NKWD) contribute to the GTP site. A KH-like domain is found at 353–437 (TRIPTARLNE…TPINIFIRQK (85 aa)).

The protein belongs to the TRAFAC class TrmE-Era-EngA-EngB-Septin-like GTPase superfamily. EngA (Der) GTPase family. In terms of assembly, associates with the 50S ribosomal subunit.

Its function is as follows. GTPase that plays an essential role in the late steps of ribosome biogenesis. The chain is GTPase Der from Phocaeicola vulgatus (strain ATCC 8482 / DSM 1447 / JCM 5826 / CCUG 4940 / NBRC 14291 / NCTC 11154) (Bacteroides vulgatus).